We begin with the raw amino-acid sequence, 146 residues long: Ribosome maturation factor RimP (146 aa).

The protein belongs to the RimP family.

The protein resides in the cytoplasm. In terms of biological role, required for maturation of 30S ribosomal subunits. The sequence is that of Ribosome maturation factor RimP from Helicobacter pylori (strain P12).